We begin with the raw amino-acid sequence, 216 residues long: ATP-dependent Clp protease proteolytic subunit (216 aa).

The active-site Nucleophile is S101. Residue H126 is part of the active site.

It belongs to the peptidase S14 family. Component of the chloroplastic Clp protease core complex.

Its subcellular location is the plastid. The protein resides in the chloroplast stroma. It carries out the reaction Hydrolysis of proteins to small peptides in the presence of ATP and magnesium. alpha-casein is the usual test substrate. In the absence of ATP, only oligopeptides shorter than five residues are hydrolyzed (such as succinyl-Leu-Tyr-|-NHMec, and Leu-Tyr-Leu-|-Tyr-Trp, in which cleavage of the -Tyr-|-Leu- and -Tyr-|-Trp bonds also occurs).. Its function is as follows. Cleaves peptides in various proteins in a process that requires ATP hydrolysis. Has a chymotrypsin-like activity. Plays a major role in the degradation of misfolded proteins. The polypeptide is ATP-dependent Clp protease proteolytic subunit (Triticum aestivum (Wheat)).